The following is a 358-amino-acid chain: Peptide chain release factor 1 (358 aa).

Position 233 is an N5-methylglutamine (Q233). The segment at 286-309 is disordered; it reads AELASARKSQVGTGDRSERIRTYN.

This sequence belongs to the prokaryotic/mitochondrial release factor family. Methylated by PrmC. Methylation increases the termination efficiency of RF1.

Its subcellular location is the cytoplasm. Peptide chain release factor 1 directs the termination of translation in response to the peptide chain termination codons UAG and UAA. This Carboxydothermus hydrogenoformans (strain ATCC BAA-161 / DSM 6008 / Z-2901) protein is Peptide chain release factor 1.